The sequence spans 235 residues: BPI fold-containing family A member 2 (235 aa).

Positions 1–20 (MFQLGSLVVLCGLLIGNSES) are cleaved as a signal peptide. Cys-161 and Cys-204 are oxidised to a cystine.

This sequence belongs to the BPI/LBP/Plunc superfamily. Plunc family. In terms of tissue distribution, predominates in the parotid glands, present in smaller amounts (1/10) in the submaxillary glands and in the sublingual glands, and at lower amount in the pancreas but undetectable in the liver. Found also in lacrimal gland.

The protein resides in the secreted. Functionally, has strong antibacterial activity against P.aeruginosa. This is BPI fold-containing family A member 2 (Bpifa2) from Mus musculus (Mouse).